The sequence spans 96 residues: Protein RnfH (96 aa).

Belongs to the UPF0125 (RnfH) family.

The protein is Protein RnfH of Psychromonas ingrahamii (strain DSM 17664 / CCUG 51855 / 37).